Consider the following 426-residue polypeptide: 3-phosphoshikimate 1-carboxyvinyltransferase (426 aa).

Residues Lys-22, Ser-23, and Arg-27 each coordinate 3-phosphoshikimate. Lys-22 serves as a coordination point for phosphoenolpyruvate. Phosphoenolpyruvate is bound by residues Gly-96 and Arg-124. 7 residues coordinate 3-phosphoshikimate: Ser-170, Ser-171, Gln-172, Ser-198, Asp-314, Asn-337, and Lys-341. Phosphoenolpyruvate is bound at residue Gln-172. Residue Asp-314 is the Proton acceptor of the active site. Phosphoenolpyruvate-binding residues include Arg-345, Arg-387, and Lys-412.

This sequence belongs to the EPSP synthase family. Monomer.

Its subcellular location is the cytoplasm. It carries out the reaction 3-phosphoshikimate + phosphoenolpyruvate = 5-O-(1-carboxyvinyl)-3-phosphoshikimate + phosphate. Its pathway is metabolic intermediate biosynthesis; chorismate biosynthesis; chorismate from D-erythrose 4-phosphate and phosphoenolpyruvate: step 6/7. In terms of biological role, catalyzes the transfer of the enolpyruvyl moiety of phosphoenolpyruvate (PEP) to the 5-hydroxyl of shikimate-3-phosphate (S3P) to produce enolpyruvyl shikimate-3-phosphate and inorganic phosphate. This is 3-phosphoshikimate 1-carboxyvinyltransferase from Shewanella baltica (strain OS185).